Reading from the N-terminus, the 162-residue chain is Phenazine biosynthesis protein PhzA1 (162 aa).

It belongs to the PhzA/PhzB family.

Its pathway is antibiotic biosynthesis; phenazine biosynthesis. In terms of biological role, involved in the biosynthesis of the antibiotic phenazine, a nitrogen-containing heterocyclic molecule. PhzA1 (operon phzA1B1C1E1F1G1) has a role in the biosynthesis of the phenazine during planktonic growth. This Pseudomonas aeruginosa (strain ATCC 15692 / DSM 22644 / CIP 104116 / JCM 14847 / LMG 12228 / 1C / PRS 101 / PAO1) protein is Phenazine biosynthesis protein PhzA1.